The chain runs to 113 residues: Protein AV2 (113 aa).

A disordered region spans residues 94-113 (SKTGLGEQAHVQKAHDVQDV).

The protein belongs to the geminiviridae protein AV2/V2 family. As to quaternary structure, interacts with host SGS3.

It is found in the host cytoplasm. It localises to the host perinuclear region. Its function is as follows. Through its interaction with host SGS3, acts as a suppressor of RNA-mediated gene silencing, also known as post-transcriptional gene silencing (PTGS), a mechanism of plant viral defense that limits the accumulation of viral RNAs. The protein is Protein AV2 of African cassava mosaic virus (isolate West Kenyan 844) (ACMV).